A 439-amino-acid chain; its full sequence is Branched-chain amino acid permease BrnQ (439 aa).

Over Met-1–Asp-9 the chain is Cytoplasmic. A helical transmembrane segment spans residues Ile-10–Pro-30. Residues Pro-31 to Thr-43 are Periplasmic-facing. A helical transmembrane segment spans residues Ala-44–Ala-64. Topologically, residues Lys-65–Lys-79 are cytoplasmic. The helical transmembrane segment at Val-80–Pro-100 threads the bilayer. Residues Arg-101–Ser-118 lie on the Periplasmic side of the membrane. A helical transmembrane segment spans residues Ala-119 to Tyr-139. At Pro-140–Asn-149 the chain is on the cytoplasmic side. The chain crosses the membrane as a helical span at residues Phe-150 to Pro-170. Topologically, residues Ala-171–Gly-189 are periplasmic. A helical membrane pass occupies residues Phe-190–Val-210. Residues Asn-211–Arg-226 are Cytoplasmic-facing. Residues Tyr-227 to Phe-247 traverse the membrane as a helical segment. Residues Arg-248–Gly-277 are Periplasmic-facing. A helical membrane pass occupies residues Ala-278–Leu-298. Topologically, residues Thr-299–Thr-316 are cytoplasmic. Residues Leu-317–Ile-337 form a helical membrane-spanning segment. Residue Gln-338 is a topological domain, periplasmic. A helical transmembrane segment spans residues Ile-339 to Phe-359. The Cytoplasmic portion of the chain corresponds to Thr-360 to Arg-369. A helical transmembrane segment spans residues Ile-370 to Ser-390. Topologically, residues Ala-391 to Pro-404 are periplasmic. Residues Leu-405–Ile-425 form a helical membrane-spanning segment. At Trp-426–His-439 the chain is on the cytoplasmic side.

This sequence belongs to the branched chain amino acid transporter family.

Its subcellular location is the cell inner membrane. Its function is as follows. Liv-II branched chain amino acid transport system, which transports leucine, valine and isoleucine. This Salmonella typhimurium (strain LT2 / SGSC1412 / ATCC 700720) protein is Branched-chain amino acid permease BrnQ.